Consider the following 402-residue polypeptide: NADH-quinone oxidoreductase subunit D (402 aa).

Belongs to the complex I 49 kDa subunit family. NDH-1 is composed of 14 different subunits. Subunits NuoB, C, D, E, F, and G constitute the peripheral sector of the complex.

The protein localises to the cell inner membrane. It catalyses the reaction a quinone + NADH + 5 H(+)(in) = a quinol + NAD(+) + 4 H(+)(out). Functionally, NDH-1 shuttles electrons from NADH, via FMN and iron-sulfur (Fe-S) centers, to quinones in the respiratory chain. The immediate electron acceptor for the enzyme in this species is believed to be ubiquinone. Couples the redox reaction to proton translocation (for every two electrons transferred, four hydrogen ions are translocated across the cytoplasmic membrane), and thus conserves the redox energy in a proton gradient. This is NADH-quinone oxidoreductase subunit D from Rhodopseudomonas palustris (strain ATCC BAA-98 / CGA009).